The sequence spans 177 residues: Large ribosomal subunit protein uL6 (177 aa).

The tract at residues 154-177 (PEPYKGKGVRYADEQVRRKEAKKK) is disordered. Basic and acidic residues predominate over residues 155–171 (EPYKGKGVRYADEQVRR).

This sequence belongs to the universal ribosomal protein uL6 family. As to quaternary structure, part of the 50S ribosomal subunit.

Its function is as follows. This protein binds to the 23S rRNA, and is important in its secondary structure. It is located near the subunit interface in the base of the L7/L12 stalk, and near the tRNA binding site of the peptidyltransferase center. The chain is Large ribosomal subunit protein uL6 from Alcanivorax borkumensis (strain ATCC 700651 / DSM 11573 / NCIMB 13689 / SK2).